The chain runs to 482 residues: Methylenetetrahydrofolate--tRNA-(uracil-5-)-methyltransferase TrmFO (482 aa).

FAD is bound at residue 11 to 16 (GAGLAG).

Belongs to the MnmG family. TrmFO subfamily. FAD serves as cofactor.

Its subcellular location is the cytoplasm. It catalyses the reaction uridine(54) in tRNA + (6R)-5,10-methylene-5,6,7,8-tetrahydrofolate + NADH + H(+) = 5-methyluridine(54) in tRNA + (6S)-5,6,7,8-tetrahydrofolate + NAD(+). It carries out the reaction uridine(54) in tRNA + (6R)-5,10-methylene-5,6,7,8-tetrahydrofolate + NADPH + H(+) = 5-methyluridine(54) in tRNA + (6S)-5,6,7,8-tetrahydrofolate + NADP(+). In terms of biological role, catalyzes the folate-dependent formation of 5-methyl-uridine at position 54 (M-5-U54) in all tRNAs. In Nitratidesulfovibrio vulgaris (strain DP4) (Desulfovibrio vulgaris), this protein is Methylenetetrahydrofolate--tRNA-(uracil-5-)-methyltransferase TrmFO.